Consider the following 190-residue polypeptide: Protein LZIC (190 aa).

A coiled-coil region spans residues 6-64 (TTETSKLKQNLEEQLDRLMQQLQDLEECREELDADEYEETKKETLEQLSEINDSLKKIM).

Belongs to the CTNNBIP1 family. As to quaternary structure, does not interact with CTNNB1.

This Gallus gallus (Chicken) protein is Protein LZIC (LZIC).